We begin with the raw amino-acid sequence, 505 residues long: Maturase K (505 aa).

Belongs to the intron maturase 2 family. MatK subfamily.

It localises to the plastid. The protein localises to the chloroplast. In terms of biological role, usually encoded in the trnK tRNA gene intron. Probably assists in splicing its own and other chloroplast group II introns. The chain is Maturase K from Calycanthus floridus (Eastern sweetshrub).